Consider the following 376-residue polypeptide: Cyclin-dependent kinase 9-B (376 aa).

Residues Tyr19–Phe319 enclose the Protein kinase domain. ATP contacts are provided by residues Ile25–Val33 and Lys48. Asp153 acts as the Proton acceptor in catalysis. Positions Pro345–Phe376 are disordered. A compositionally biased stretch (low complexity) spans Pro354–Gln369.

Belongs to the protein kinase superfamily. CMGC Ser/Thr protein kinase family. CDC2/CDKX subfamily. As to quaternary structure, associates with cyclin-T to form P-TEFb.

It localises to the nucleus. The enzyme catalyses L-seryl-[protein] + ATP = O-phospho-L-seryl-[protein] + ADP + H(+). It carries out the reaction L-threonyl-[protein] + ATP = O-phospho-L-threonyl-[protein] + ADP + H(+). It catalyses the reaction [DNA-directed RNA polymerase] + ATP = phospho-[DNA-directed RNA polymerase] + ADP + H(+). Functionally, member of the cyclin-dependent kinase pair (CDK9/cyclin-T) complex, also called positive transcription elongation factor B (P-TEFb), which is proposed to facilitate the transition from abortive to production elongation by phosphorylating the CTD (C-terminal domain) of the large subunit of RNA polymerase II (RNAP II) and SUPT5H. The protein is Cyclin-dependent kinase 9-B (cdk9-b) of Xenopus laevis (African clawed frog).